A 93-amino-acid chain; its full sequence is Stromal cell-derived factor 1 (93 aa).

Positions 1–21 (MDAKVVAVLALVLAALCISDG) are cleaved as a signal peptide. A Receptor activation motif motif is present at residues 22-23 (KP). The receptor and heparin binding stretch occupies residues 29-33 (RCPCR). Disulfide bonds link Cys30–Cys55 and Cys32–Cys71. Receptor binding regions lie at residues 39-41 (IAR), 48-50 (KIL), and 60-70 (VARLKNNNRQV). Heparin contacts are provided by residues 41–51 (RANVKHLKILN), Arg62, Gln69, and Lys85.

The protein belongs to the intercrine alpha (chemokine CxC) family. In terms of assembly, monomer or homodimer; in equilibrium. Dimer formation is induced by non acidic pH and the presence of multivalent anions, and by binding to CXCR4 or heparin. Monomeric form is required for full chemotactic activity and resistance to ischemia/reperfusion injury, whereas the dimeric form acts as a partial agonist of CXCR4, stimulating Ca2+ mobilization but with no chemotactic activity and instead acts as a selective antagonist that blocks chemotaxis induced by the monomeric form. Interacts with the N-terminus of ACKR3. Interacts with integrin subunit ITGB3 (via the allosteric site (site 2)). Interacts with TNFAIP6 (via Link domain). In terms of tissue distribution, highest expression levels detected in kidney, liver, spleen and muscle. Isoform Alpha is expressed ubiquitously but at varying levels, while isoform Beta displays tissue-specific expression, with expression detected in kidney, liver, heart, spleen and muscle but not in lung, colon, brain, skin and stomach.

The protein resides in the secreted. Functionally, chemoattractant active on T-lymphocytes and monocytes but not neutrophils. Activates the C-X-C chemokine receptor CXCR4 to induce a rapid and transient rise in the level of intracellular calcium ions and chemotaxis. Also binds to atypical chemokine receptor ACKR3, which activates the beta-arrestin pathway and acts as a scavenger receptor for SDF-1. Binds to the allosteric site (site 2) of integrins and activates integrins ITGAV:ITGB3, ITGA4:ITGB1 and ITGA5:ITGB1 in a CXCR4-independent manner. Acts as a positive regulator of monocyte migration and a negative regulator of monocyte adhesion via the LYN kinase. Stimulates migration of monocytes and T-lymphocytes through its receptors, CXCR4 and ACKR3, and decreases monocyte adherence to surfaces coated with ICAM-1, a ligand for beta-2 integrins. SDF1A/CXCR4 signaling axis inhibits beta-2 integrin LFA-1 mediated adhesion of monocytes to ICAM-1 through LYN kinase. Plays a protective role after myocardial infarction. Induces down-regulation and internalization of ACKR3 expressed in various cells. Has several critical functions during embryonic development; required for B-cell lymphopoiesis, myelopoiesis in bone marrow and heart ventricular septum formation. Stimulates the proliferation of bone marrow-derived B-cell progenitors in the presence of IL7 as well as growth of stromal cell-dependent pre-B-cells. In Mus musculus (Mouse), this protein is Stromal cell-derived factor 1 (Cxcl12).